The following is a 562-amino-acid chain: Arginine--tRNA ligase 2 (562 aa).

Residues 122–132 carry the 'HIGH' region motif; sequence PNIAKPFSMGH.

Belongs to the class-I aminoacyl-tRNA synthetase family. As to quaternary structure, monomer.

It localises to the cytoplasm. The catalysed reaction is tRNA(Arg) + L-arginine + ATP = L-arginyl-tRNA(Arg) + AMP + diphosphate. This is Arginine--tRNA ligase 2 (argS2) from Bacillus anthracis.